Consider the following 372-residue polypeptide: Alanine racemase (372 aa).

Catalysis depends on Lys-48, which acts as the Proton acceptor; specific for D-alanine. Lys-48 is modified (N6-(pyridoxal phosphate)lysine). Arg-143 contributes to the substrate binding site. The active-site Proton acceptor; specific for L-alanine is Tyr-268. Residue Met-316 participates in substrate binding.

The protein belongs to the alanine racemase family. It depends on pyridoxal 5'-phosphate as a cofactor.

It carries out the reaction L-alanine = D-alanine. It functions in the pathway amino-acid biosynthesis; D-alanine biosynthesis; D-alanine from L-alanine: step 1/1. Catalyzes the interconversion of L-alanine and D-alanine. May also act on other amino acids. This is Alanine racemase (alr) from Vibrio vulnificus (strain YJ016).